The following is a 119-amino-acid chain: Phosphoribosyl-AMP cyclohydrolase (119 aa).

D77 lines the Mg(2+) pocket. C78 is a Zn(2+) binding site. D79 and D81 together coordinate Mg(2+). Residues C94 and C101 each contribute to the Zn(2+) site.

Belongs to the PRA-CH family. In terms of assembly, homodimer. The cofactor is Mg(2+). Zn(2+) serves as cofactor.

It localises to the cytoplasm. It carries out the reaction 1-(5-phospho-beta-D-ribosyl)-5'-AMP + H2O = 1-(5-phospho-beta-D-ribosyl)-5-[(5-phospho-beta-D-ribosylamino)methylideneamino]imidazole-4-carboxamide. It functions in the pathway amino-acid biosynthesis; L-histidine biosynthesis; L-histidine from 5-phospho-alpha-D-ribose 1-diphosphate: step 3/9. Catalyzes the hydrolysis of the adenine ring of phosphoribosyl-AMP. The chain is Phosphoribosyl-AMP cyclohydrolase from Dinoroseobacter shibae (strain DSM 16493 / NCIMB 14021 / DFL 12).